We begin with the raw amino-acid sequence, 200 residues long: QLCLLQPLGSGGFGSVYKATYHGATVAVKQVKNSSKNRLASRQSFWAELNVARLQHNNVVRVVAASTCAPASQNSLGTIVMEYVGNITLHHVIYGTGDVWRQSEDDEGGCGRKALSMEETVCYSCDIMTGLAFLHSQGIVHLDLKPANIFITEQGVCKIGDFGCSQKLEEGLSQSPHVCQQGGTYTHRAPELLKGERVTA.

One can recognise a Protein kinase domain in the interval 2-200; the sequence is LCLLQPLGSG…ELLKGERVTA (199 aa). ATP-binding positions include 8–16 and K29; that span reads LGSGGFGSV. The active-site Proton acceptor is the D143.

Belongs to the protein kinase superfamily. Ser/Thr protein kinase family.

It catalyses the reaction L-seryl-[protein] + ATP = O-phospho-L-seryl-[protein] + ADP + H(+). The catalysed reaction is L-threonyl-[protein] + ATP = O-phospho-L-threonyl-[protein] + ADP + H(+). This Ciconia nigra (Black stork) protein is Serine/threonine-protein kinase mos (MOS).